Reading from the N-terminus, the 314-residue chain is Phospho-N-acetylmuramoyl-pentapeptide-transferase (314 aa).

Transmembrane regions (helical) follow at residues 4–24, 52–72, 77–97, 111–131, 146–166, 169–189, 191–211, 219–239, 242–262, and 294–314; these read LIFY…PIFI, TMGG…TYFI, LFLI…LDDY, IQKL…ISIF, LDLK…MSNA, LTDG…LFTA, IAGI…AYLF, IFMG…LALY, VELF…SVII, and IVLI…GGVL.

It belongs to the glycosyltransferase 4 family. MraY subfamily. Mg(2+) is required as a cofactor.

It is found in the cell inner membrane. The catalysed reaction is UDP-N-acetyl-alpha-D-muramoyl-L-alanyl-gamma-D-glutamyl-meso-2,6-diaminopimeloyl-D-alanyl-D-alanine + di-trans,octa-cis-undecaprenyl phosphate = di-trans,octa-cis-undecaprenyl diphospho-N-acetyl-alpha-D-muramoyl-L-alanyl-D-glutamyl-meso-2,6-diaminopimeloyl-D-alanyl-D-alanine + UMP. The protein operates within cell wall biogenesis; peptidoglycan biosynthesis. Its function is as follows. Catalyzes the initial step of the lipid cycle reactions in the biosynthesis of the cell wall peptidoglycan: transfers peptidoglycan precursor phospho-MurNAc-pentapeptide from UDP-MurNAc-pentapeptide onto the lipid carrier undecaprenyl phosphate, yielding undecaprenyl-pyrophosphoryl-MurNAc-pentapeptide, known as lipid I. The polypeptide is Phospho-N-acetylmuramoyl-pentapeptide-transferase (Petrotoga mobilis (strain DSM 10674 / SJ95)).